We begin with the raw amino-acid sequence, 121 residues long: Large ribosomal subunit protein bL20 (121 aa).

This sequence belongs to the bacterial ribosomal protein bL20 family.

In terms of biological role, binds directly to 23S ribosomal RNA and is necessary for the in vitro assembly process of the 50S ribosomal subunit. It is not involved in the protein synthesizing functions of that subunit. This is Large ribosomal subunit protein bL20 from Petrotoga mobilis (strain DSM 10674 / SJ95).